The chain runs to 299 residues: Elongation factor Ts (299 aa).

Residues 81–84 are involved in Mg(2+) ion dislocation from EF-Tu; sequence TDFV.

This sequence belongs to the EF-Ts family.

The protein resides in the cytoplasm. In terms of biological role, associates with the EF-Tu.GDP complex and induces the exchange of GDP to GTP. It remains bound to the aminoacyl-tRNA.EF-Tu.GTP complex up to the GTP hydrolysis stage on the ribosome. This chain is Elongation factor Ts, found in Halothermothrix orenii (strain H 168 / OCM 544 / DSM 9562).